The sequence spans 336 residues: MEKYNAIKIVKGSGGFGGPLTVKPEEGKDTLLYITGGGAEPEIVEKIVNLTGCKAVNGFKTSVPEEQIFLVIIDCGGTLRCGIYPQKRIPTINVMPVGKSGPLAKFITEDIYVSAVGLNQISLADSSAEPIKSTKVPEEGKREFKYSADKKVSQSLAENSKSSIVQKIGMGAGKVVNTLYQAGRDAVQSMITTILPFMAFVAMLIGIIQGSGFGNWFAKILVPLAGNGIGLMILGFICSIPLLSALLGPGAVIAQIVGTLIGVEIGKGTIPPSLALPALFAINTQCACDFIPVGLGLAEAEPETVEVGVPSVLYSRFMIGVPRVAVAWVASIGLYQ.

One can recognise a PTS EIIB type-5 domain in the interval 3–195; sequence KYNAIKIVKG…AVQSMITTIL (193 aa). Cysteine 75 functions as the Phosphocysteine intermediate; for EIIB activity in the catalytic mechanism. Cysteine 75 is modified (phosphocysteine; by EIIA). Transmembrane regions (helical) follow at residues 194-214, 228-248, 250-270, 278-298, and 312-332; these read ILPF…SGFG, GIGL…ALLG, GAVI…KGTI, ALFA…LGLA, and VLYS…VASI.

The protein localises to the cell membrane. It catalyses the reaction D-sorbitol(out) + N(pros)-phospho-L-histidyl-[protein] = D-sorbitol 6-phosphate(in) + L-histidyl-[protein]. Its function is as follows. The phosphoenolpyruvate-dependent sugar phosphotransferase system (sugar PTS), a major carbohydrate active transport system, catalyzes the phosphorylation of incoming sugar substrates concomitantly with their translocation across the cell membrane. The enzyme II complex composed of SrlA, SrlB and SrlE is involved in glucitol/sorbitol transport. The chain is PTS system glucitol/sorbitol-specific EIIB component (srlE) from Clostridium beijerinckii (strain ATCC 51743 / NCIMB 8052) (Clostridium acetobutylicum).